The following is a 493-amino-acid chain: Na(+)/H(+) antiporter subunit D (493 aa).

14 helical membrane passes run 4 to 23 (LVIL…ILFA), 30 to 52 (RVIS…VDVY), 72 to 94 (LVAD…VCLF), 107 to 126 (YYFY…AFLT), 130 to 149 (FNLF…LIVL), 162 to 184 (YVVI…YSIT), 204 to 226 (VLNV…FPLY), 233 to 255 (YFGP…GIYA), 270 to 292 (FTHT…GAVS), 299 to 321 (ILSY…YTQL), 325 to 347 (GAIY…AGAT), 368 to 390 (WLAW…SGFF), 405 to 427 (YIIA…KIFI), and 448 to 470 (LLLP…EPIF).

This sequence belongs to the CPA3 antiporters (TC 2.A.63) subunit D family. Forms a heterooligomeric complex that consists of seven subunits: MrpA, MrpB, MrpC, MrpD, MrpE, MrpF and MrpG.

It localises to the cell membrane. Mnh complex is a Na(+)Li(+)/H(+) antiporter involved in Na(+) and/or Li(+) excretion and Na(+) resistance. Na(+)/H(+) antiport consumes a transmembrane electrical potential, and is thus inferred to be electrogenic. Does not transport K(+), Ca(2+) or Mg(2+). Its function is as follows. Mrp complex is a Na(+)/H(+) antiporter involved in Na(+) excretion and Na(+) resistance. The sequence is that of Na(+)/H(+) antiporter subunit D (mrpD) from Alkalihalophilus pseudofirmus (strain ATCC BAA-2126 / JCM 17055 / OF4) (Bacillus pseudofirmus).